A 241-amino-acid polypeptide reads, in one-letter code: Small ribosomal subunit protein bS6 (241 aa).

Residues 97-108 (KPKIRERNRKYT) show a composition bias toward basic residues. The segment at 97–241 (KPKIRERNRK…YNNKKPQSSN (145 aa)) is disordered. The span at 109–118 (LRRDRFDKPN) shows a compositional bias: basic and acidic residues. 2 stretches are compositionally biased toward low complexity: residues 130 to 151 (QDQQ…QASQ) and 161 to 182 (DDFQ…NQSG). Basic and acidic residues predominate over residues 183–193 (YHRENNRHNQE). Residues 194-210 (NMHQNNKNHQNQTSQTQ) show a composition bias toward low complexity.

This sequence belongs to the bacterial ribosomal protein bS6 family.

Binds together with bS18 to 16S ribosomal RNA. The protein is Small ribosomal subunit protein bS6 of Mesomycoplasma hyopneumoniae (strain J / ATCC 25934 / NCTC 10110) (Mycoplasma hyopneumoniae).